Reading from the N-terminus, the 191-residue chain is Fe/S biogenesis protein NfuA (191 aa).

Residues Cys-149 and Cys-152 each contribute to the [4Fe-4S] cluster site.

It belongs to the NfuA family. As to quaternary structure, homodimer. The cofactor is [4Fe-4S] cluster.

Functionally, involved in iron-sulfur cluster biogenesis. Binds a 4Fe-4S cluster, can transfer this cluster to apoproteins, and thereby intervenes in the maturation of Fe/S proteins. Could also act as a scaffold/chaperone for damaged Fe/S proteins. This chain is Fe/S biogenesis protein NfuA, found in Pectobacterium carotovorum subsp. carotovorum (strain PC1).